The chain runs to 217 residues: Elongation factor Ts (217 aa).

The tract at residues 82–85 (TDFV) is involved in Mg(2+) ion dislocation from EF-Tu.

This sequence belongs to the EF-Ts family.

The protein localises to the cytoplasm. Associates with the EF-Tu.GDP complex and induces the exchange of GDP to GTP. It remains bound to the aminoacyl-tRNA.EF-Tu.GTP complex up to the GTP hydrolysis stage on the ribosome. This Synechococcus sp. (strain RCC307) protein is Elongation factor Ts.